The primary structure comprises 62 residues: Short neurotoxin 3 (62 aa).

Cystine bridges form between Cys-3/Cys-24, Cys-17/Cys-41, Cys-43/Cys-54, and Cys-55/Cys-60.

Belongs to the three-finger toxin family. Short-chain subfamily. Type I alpha-neurotoxin sub-subfamily. Expressed by the venom gland.

It is found in the secreted. Binds to muscle nicotinic acetylcholine receptor (nAChR) and inhibit acetylcholine from binding to the receptor, thereby impairing neuromuscular transmission. The polypeptide is Short neurotoxin 3 (Naja mossambica (Mozambique spitting cobra)).